The chain runs to 122 residues: Large ribosomal subunit protein bL17 (122 aa).

It belongs to the bacterial ribosomal protein bL17 family. As to quaternary structure, part of the 50S ribosomal subunit. Contacts protein L32.

This is Large ribosomal subunit protein bL17 from Staphylococcus epidermidis (strain ATCC 35984 / DSM 28319 / BCRC 17069 / CCUG 31568 / BM 3577 / RP62A).